The chain runs to 126 residues: Holo-[acyl-carrier-protein] synthase (126 aa).

Mg(2+)-binding residues include D8 and E50.

Belongs to the P-Pant transferase superfamily. AcpS family. Mg(2+) serves as cofactor.

It localises to the cytoplasm. The catalysed reaction is apo-[ACP] + CoA = holo-[ACP] + adenosine 3',5'-bisphosphate + H(+). Transfers the 4'-phosphopantetheine moiety from coenzyme A to a Ser of acyl-carrier-protein. The chain is Holo-[acyl-carrier-protein] synthase from Micrococcus luteus (strain ATCC 4698 / DSM 20030 / JCM 1464 / CCM 169 / CCUG 5858 / IAM 1056 / NBRC 3333 / NCIMB 9278 / NCTC 2665 / VKM Ac-2230) (Micrococcus lysodeikticus).